An 879-amino-acid chain; its full sequence is MKMLTRLQVLTLALFSKGFLLSLGDHNFLRREIKIEGDLVLGGLFPIKEKGTGTEECGRINEDRGIQRLEAMLFAIDEINKDDYLLPGVKLGVHILDTCSRDTYALEQSLEFVRASLTKVDEAEYMCPDGSYAIQENIPLLIAGVIGGSYSSVSIQVANLLRLFQIPQISYASTSAKLSDKSRYDYFARTVPPDFYQAKAMAEILRFFNWTYVSTVASEGDYGETGIEAFEQEARLRNICIATAEKVGRSNIRKSYDSVIRELLQKPNARVVVLFMRSDDSRELIAAASRANASFTWVASDGWGAQESIIKGSEHVAYGAITLELASQPVRQFDRYFQSLNPYNNHRNPWFRDFWEQKFQCSLQNKRNHRRVCDKHLAIDSSNYEQESKIMFVVNAVYAMAHALHKMQRTLCPNTTKLCDAMKILDGKKLYKDYLLKINFTAPFNPNKDADSIVKFDTFGDGMGRYNVFNFQNVGGKYSYLKVGHWAETLSLDVNSIHWSRNSVPTSQCSDPCAPNEMKNMQPGDVCCWICIPCESYEYLADEFTCMDCGPGQWPTADLTGCYDLPEDYIRWEDAWAIGPVTIACLGFMCTCMVITVFIKHNNTPLVKASGRELCYILLFGVGLSYCMTFFFIAKPSPVICALRRLGLGSSFAICYSALLTKTNCIARIFDGVKNGAQRPKFISPSSQVFICLGLILVQIVMVSVWLILEAPGTRRYTLAEKRETVILKCNVKDSSMLISLTYDVILVILCTVYAFKTRKCPENFNEAKFIGFTMYTTCIIWLAFLPIFYVTSSDYRVQTTTMCISVSLSGFVVLGCLFAPKVHIILFQPQKNVVTHRLHLNRFSVSGTGTTYSQSSASMYVPTVCNGREVLDSTTSSL.

An N-terminal signal peptide occupies residues 1–24 (MKMLTRLQVLTLALFSKGFLLSLG). Topologically, residues 25–577 (DHNFLRREIK…DYIRWEDAWA (553 aa)) are extracellular. A disulfide bridge links cysteine 57 with cysteine 99. L-glutamate contacts are provided by residues serine 151 and 172 to 174 (AST). N-linked (GlcNAc...) asparagine glycosylation occurs at asparagine 209. Residue tyrosine 222 coordinates L-glutamate. 7 disulfides stabilise this stretch: cysteine 240/cysteine 527, cysteine 361/cysteine 373, cysteine 412/cysteine 419, cysteine 509/cysteine 528, cysteine 513/cysteine 531, cysteine 534/cysteine 546, and cysteine 549/cysteine 562. An N-linked (GlcNAc...) asparagine glycan is attached at asparagine 292. Aspartate 301 contributes to the L-glutamate binding site. Residue lysine 389 participates in L-glutamate binding. 2 N-linked (GlcNAc...) asparagine glycosylation sites follow: asparagine 414 and asparagine 439. Residues 578 to 598 (IGPVTIACLGFMCTCMVITVF) form a helical membrane-spanning segment. The Cytoplasmic segment spans residues 599–613 (IKHNNTPLVKASGRE). The chain crosses the membrane as a helical span at residues 614–634 (LCYILLFGVGLSYCMTFFFIA). Topologically, residues 635 to 688 (KPSPVICALRRLGLGSSFAICYSALLTKTNCIARIFDGVKNGAQRPKFISPSSQ) are extracellular. A helical membrane pass occupies residues 689–709 (VFICLGLILVQIVMVSVWLIL). Over 710–735 (EAPGTRRYTLAEKRETVILKCNVKDS) the chain is Cytoplasmic. Residues 736–756 (SMLISLTYDVILVILCTVYAF) form a helical membrane-spanning segment. Topologically, residues 757 to 769 (KTRKCPENFNEAK) are extracellular. The helical transmembrane segment at 770–790 (FIGFTMYTTCIIWLAFLPIFY) threads the bilayer. The Cytoplasmic portion of the chain corresponds to 791 to 807 (VTSSDYRVQTTTMCISV). A helical membrane pass occupies residues 808-828 (SLSGFVVLGCLFAPKVHIILF). The Extracellular segment spans residues 829–879 (QPQKNVVTHRLHLNRFSVSGTGTTYSQSSASMYVPTVCNGREVLDSTTSSL).

The protein belongs to the G-protein coupled receptor 3 family. In terms of assembly, interacts with TAMALIN.

The protein localises to the cell membrane. G-protein coupled receptor for glutamate. Ligand binding causes a conformation change that triggers signaling via guanine nucleotide-binding proteins (G proteins) and modulates the activity of down-stream effectors. Signaling inhibits adenylate cyclase activity. This is Metabotropic glutamate receptor 3 (GRM3) from Macaca fascicularis (Crab-eating macaque).